Reading from the N-terminus, the 336-residue chain is NADH-quinone oxidoreductase subunit H (336 aa).

Transmembrane regions (helical) follow at residues 17-37, 85-105, 116-136, 154-174, 190-210, 247-267, 274-294, and 309-329; these read WFII…TYAI, ALFT…LAVM, LGIG…GVIT, AAQM…IVLL, VWNI…AQAE, VYMF…WLPI, IPGI…QFWI, and FAWK…AVVV.

The protein belongs to the complex I subunit 1 family. In terms of assembly, NDH-1 is composed of 14 different subunits. Subunits NuoA, H, J, K, L, M, N constitute the membrane sector of the complex.

It localises to the cell membrane. It carries out the reaction a quinone + NADH + 5 H(+)(in) = a quinol + NAD(+) + 4 H(+)(out). NDH-1 shuttles electrons from NADH, via FMN and iron-sulfur (Fe-S) centers, to quinones in the respiratory chain. The immediate electron acceptor for the enzyme in this species is believed to be ubiquinone. Couples the redox reaction to proton translocation (for every two electrons transferred, four hydrogen ions are translocated across the cytoplasmic membrane), and thus conserves the redox energy in a proton gradient. This subunit may bind ubiquinone. This is NADH-quinone oxidoreductase subunit H from Brevibacillus brevis (strain 47 / JCM 6285 / NBRC 100599).